We begin with the raw amino-acid sequence, 97 residues long: Exodeoxyribonuclease 7 small subunit (97 aa).

The segment at 1 to 22 (MAKTASPGATPPGNGTEPLPDN) is disordered.

This sequence belongs to the XseB family. Heterooligomer composed of large and small subunits.

The protein resides in the cytoplasm. It catalyses the reaction Exonucleolytic cleavage in either 5'- to 3'- or 3'- to 5'-direction to yield nucleoside 5'-phosphates.. Bidirectionally degrades single-stranded DNA into large acid-insoluble oligonucleotides, which are then degraded further into small acid-soluble oligonucleotides. This Burkholderia lata (strain ATCC 17760 / DSM 23089 / LMG 22485 / NCIMB 9086 / R18194 / 383) protein is Exodeoxyribonuclease 7 small subunit.